The primary structure comprises 424 residues: Histidinol dehydrogenase (424 aa).

NAD(+) is bound by residues Tyr-121, Gln-183, and Asn-206. Positions 229, 251, and 254 each coordinate substrate. Zn(2+) contacts are provided by Gln-251 and His-254. Residues Glu-319 and His-320 each act as proton acceptor in the active site. Residues His-320, Asp-353, Glu-407, and His-412 each contribute to the substrate site. Asp-353 is a Zn(2+) binding site. His-412 contributes to the Zn(2+) binding site.

This sequence belongs to the histidinol dehydrogenase family. Zn(2+) serves as cofactor.

The enzyme catalyses L-histidinol + 2 NAD(+) + H2O = L-histidine + 2 NADH + 3 H(+). It participates in amino-acid biosynthesis; L-histidine biosynthesis; L-histidine from 5-phospho-alpha-D-ribose 1-diphosphate: step 9/9. Functionally, catalyzes the sequential NAD-dependent oxidations of L-histidinol to L-histidinaldehyde and then to L-histidine. In Geobacillus kaustophilus (strain HTA426), this protein is Histidinol dehydrogenase.